We begin with the raw amino-acid sequence, 556 residues long: Dihydroxy-acid dehydratase (556 aa).

Residue Asp-78 coordinates Mg(2+). Cys-119 is a [2Fe-2S] cluster binding site. Residues Asp-120 and Lys-121 each contribute to the Mg(2+) site. Position 121 is an N6-carboxylysine (Lys-121). Cys-195 serves as a coordination point for [2Fe-2S] cluster. Glu-446 provides a ligand contact to Mg(2+). Ser-472 (proton acceptor) is an active-site residue.

This sequence belongs to the IlvD/Edd family. In terms of assembly, homodimer. [2Fe-2S] cluster serves as cofactor. It depends on Mg(2+) as a cofactor.

It catalyses the reaction (2R)-2,3-dihydroxy-3-methylbutanoate = 3-methyl-2-oxobutanoate + H2O. The catalysed reaction is (2R,3R)-2,3-dihydroxy-3-methylpentanoate = (S)-3-methyl-2-oxopentanoate + H2O. It functions in the pathway amino-acid biosynthesis; L-isoleucine biosynthesis; L-isoleucine from 2-oxobutanoate: step 3/4. Its pathway is amino-acid biosynthesis; L-valine biosynthesis; L-valine from pyruvate: step 3/4. Its function is as follows. Functions in the biosynthesis of branched-chain amino acids. Catalyzes the dehydration of (2R,3R)-2,3-dihydroxy-3-methylpentanoate (2,3-dihydroxy-3-methylvalerate) into 2-oxo-3-methylpentanoate (2-oxo-3-methylvalerate) and of (2R)-2,3-dihydroxy-3-methylbutanoate (2,3-dihydroxyisovalerate) into 2-oxo-3-methylbutanoate (2-oxoisovalerate), the penultimate precursor to L-isoleucine and L-valine, respectively. The chain is Dihydroxy-acid dehydratase from Desulfatibacillum aliphaticivorans.